The chain runs to 412 residues: Allantoate amidohydrolase (412 aa).

Residues H84, D95, E130, and H193 each coordinate Zn(2+). Allantoate-binding residues include R218, N278, and R291. H385 lines the Zn(2+) pocket.

This sequence belongs to the peptidase M20 family. As to quaternary structure, homodimer. Zn(2+) is required as a cofactor.

Its subcellular location is the cytoplasm. It catalyses the reaction allantoate + H2O + 2 H(+) = (S)-2-ureidoglycine + NH4(+) + CO2. The protein operates within nitrogen metabolism; (S)-allantoin degradation. Functionally, involved in the anaerobic nitrogen utilization via the assimilation of allantoin. Catalyzes specifically the hydrolysis of allantoate to yield CO2, NH3 and S-ureidoglycine, which is unstable and readily undergoes a second deamination by S-ureidoglycine aminohydrolase AllE to yield S-ureidoglycolate and NH3. The chain is Allantoate amidohydrolase from Bacillus subtilis (strain 168).